Here is a 204-residue protein sequence, read N- to C-terminus: Ribonuclease HII (204 aa).

One can recognise an RNase H type-2 domain in the interval R8–L197. Residues D14, E15, and D106 each coordinate a divalent metal cation.

The protein belongs to the RNase HII family. Requires Mn(2+) as cofactor. Mg(2+) serves as cofactor.

The protein resides in the cytoplasm. It catalyses the reaction Endonucleolytic cleavage to 5'-phosphomonoester.. Functionally, endonuclease that specifically degrades the RNA of RNA-DNA hybrids. The polypeptide is Ribonuclease HII (Azoarcus sp. (strain BH72)).